A 343-amino-acid polypeptide reads, in one-letter code: Protein RecA (343 aa).

ATP is bound at residue 66-73 (GPESSGKT).

The protein belongs to the RecA family.

It is found in the cytoplasm. Its function is as follows. Can catalyze the hydrolysis of ATP in the presence of single-stranded DNA, the ATP-dependent uptake of single-stranded DNA by duplex DNA, and the ATP-dependent hybridization of homologous single-stranded DNAs. It interacts with LexA causing its activation and leading to its autocatalytic cleavage. In Rickettsia africae (strain ESF-5), this protein is Protein RecA.